Reading from the N-terminus, the 1298-residue chain is Ras guanine nucleotide exchange factor Q (1298 aa).

Disordered stretches follow at residues Met-1–Phe-26, Asn-46–Gly-88, Asn-211–Lys-271, Tyr-314–Gln-384, and Leu-459–Thr-533. Low complexity-rich tracts occupy residues Asn-211–Asn-245 and Thr-315–Gln-384. A coiled-coil region spans residues Ser-352–Tyr-389. Residues Leu-473–Ser-482 are compositionally biased toward polar residues. Composition is skewed to low complexity over residues Asn-483 to Asn-501 and Thr-508 to Thr-533. The 140-residue stretch at Asp-550–Gly-689 folds into the N-terminal Ras-GEF domain. The DEP domain maps to Met-723–Thr-801. 2 disordered regions span residues Ser-781–Ile-864 and Gly-884–Phe-920. Low complexity predominate over residues Ser-783 to Ile-864. The region spanning His-964 to Pro-1193 is the Ras-GEF domain. Residues Thr-1214 to Asn-1267 are disordered.

Functionally, promotes the exchange of Ras-bound GDP by GTP. Seems to play a role in chemotaxis. The sequence is that of Ras guanine nucleotide exchange factor Q (gefQ) from Dictyostelium discoideum (Social amoeba).